The sequence spans 685 residues: RING finger protein 145 (685 aa).

13 consecutive transmembrane segments (helical) span residues tyrosine 53 to proline 73, leucine 77 to serine 97, phenylalanine 123 to threonine 143, alanine 151 to isoleucine 171, phenylalanine 174 to proline 194, leucine 225 to threonine 245, tyrosine 275 to cysteine 295, threonine 316 to isoleucine 336, phenylalanine 340 to isoleucine 360, serine 384 to phenylalanine 404, leucine 410 to isoleucine 430, leucine 460 to glycine 480, and tryptophan 482 to alanine 502. The RING-type; atypical zinc finger occupies cysteine 537–histidine 575. A disordered region spans residues leucine 582–serine 685. The segment covering glutamine 583–proline 602 has biased composition (low complexity). Residues glutamate 620–alanine 631 are compositionally biased toward basic and acidic residues.

The protein localises to the membrane. The protein is RING finger protein 145 (rnf145) of Danio rerio (Zebrafish).